Consider the following 436-residue polypeptide: Transcription factor Sox-10 (436 aa).

5 disordered regions span residues 1–55 (MSDD…ERFP), 145–183 (RLRM…AEGG), 195–257 (HLDH…DFGN), 322–346 (PQTD…QPST), and 413–436 (SPSV…LSRP). Lys44 participates in a covalent cross-link: Glycyl lysine isopeptide (Lys-Gly) (interchain with G-Cter in SUMO). Residues 48-88 (DSEDERFPVCIREAVSQVLSGYDWTLVPMPVRVNGGSKSKP) form a dimerization (DIM) region. The segment at residues 90–158 (VKRPMNAFMV…QHKKDHPDYK (69 aa)) is a DNA-binding region (HMG box). Basic and acidic residues predominate over residues 145–159 (RLRMQHKKDHPDYKY). Composition is skewed to polar residues over residues 205–215 (SDGNSEHSAGQ) and 331–346 (KTES…QPST). Residues 209-295 (SEHSAGQSHG…NGHAGHPSHI (87 aa)) are transactivation domain (TAM). The tract at residues 327-436 (KAQVKTESSS…QPVYTTLSRP (110 aa)) is transactivation domain (TAC). Lys331 participates in a covalent cross-link: Glycyl lysine isopeptide (Lys-Gly) (interchain with G-Cter in SUMO).

Interacts with the sumoylation factors ube2i/ubc9 and sumo1. Sumoylated.

It localises to the cytoplasm. The protein localises to the nucleus. Acts early in neural crest formation, functioning redundantly with the other group E Sox factors sox8 and sox9 to induce neural crest progenitors. Acts downstream of wnt-signaling at the neural plate border. Involved in the specification of neural crest progenitors fated to form the pigment cell lineage. This Xenopus tropicalis (Western clawed frog) protein is Transcription factor Sox-10.